A 278-amino-acid chain; its full sequence is Protein saf1 (278 aa).

3 disordered regions span residues 1-43, 81-210, and 240-264; these read MLSK…RNMS, KKNI…DIEE, and QKLA…EDKD. Composition is skewed to basic and acidic residues over residues 22–38 and 90–103; these read QIKV…ERLS and GRVE…AERQ. 2 stretches are compositionally biased toward basic residues: residues 104–116 and 169–183; these read HKPR…KNPK and REKK…HHKK. Over residues 186–202 the composition is skewed to polar residues; it reads INASSAQPKSTTTTEAA.

The protein resides in the nucleus. The protein localises to the nucleolus. This is Protein saf1 (saf1) from Schizosaccharomyces pombe (strain 972 / ATCC 24843) (Fission yeast).